Reading from the N-terminus, the 103-residue chain is Pyrimidine/purine nucleoside phosphorylase (103 aa).

This sequence belongs to the nucleoside phosphorylase PpnP family.

It catalyses the reaction a purine D-ribonucleoside + phosphate = a purine nucleobase + alpha-D-ribose 1-phosphate. The enzyme catalyses adenosine + phosphate = alpha-D-ribose 1-phosphate + adenine. The catalysed reaction is cytidine + phosphate = cytosine + alpha-D-ribose 1-phosphate. It carries out the reaction guanosine + phosphate = alpha-D-ribose 1-phosphate + guanine. It catalyses the reaction inosine + phosphate = alpha-D-ribose 1-phosphate + hypoxanthine. The enzyme catalyses thymidine + phosphate = 2-deoxy-alpha-D-ribose 1-phosphate + thymine. The catalysed reaction is uridine + phosphate = alpha-D-ribose 1-phosphate + uracil. It carries out the reaction xanthosine + phosphate = alpha-D-ribose 1-phosphate + xanthine. Catalyzes the phosphorolysis of diverse nucleosides, yielding D-ribose 1-phosphate and the respective free bases. Can use uridine, adenosine, guanosine, cytidine, thymidine, inosine and xanthosine as substrates. Also catalyzes the reverse reactions. In Cupriavidus metallidurans (strain ATCC 43123 / DSM 2839 / NBRC 102507 / CH34) (Ralstonia metallidurans), this protein is Pyrimidine/purine nucleoside phosphorylase.